We begin with the raw amino-acid sequence, 356 residues long: UDP-3-O-acylglucosamine N-acyltransferase (356 aa).

His-242 serves as the catalytic Proton acceptor.

It belongs to the transferase hexapeptide repeat family. LpxD subfamily. Homotrimer.

The enzyme catalyses a UDP-3-O-[(3R)-3-hydroxyacyl]-alpha-D-glucosamine + a (3R)-hydroxyacyl-[ACP] = a UDP-2-N,3-O-bis[(3R)-3-hydroxyacyl]-alpha-D-glucosamine + holo-[ACP] + H(+). The protein operates within bacterial outer membrane biogenesis; LPS lipid A biosynthesis. Its function is as follows. Catalyzes the N-acylation of UDP-3-O-acylglucosamine using 3-hydroxyacyl-ACP as the acyl donor. Is involved in the biosynthesis of lipid A, a phosphorylated glycolipid that anchors the lipopolysaccharide to the outer membrane of the cell. In Acinetobacter baylyi (strain ATCC 33305 / BD413 / ADP1), this protein is UDP-3-O-acylglucosamine N-acyltransferase.